A 211-amino-acid polypeptide reads, in one-letter code: 2,3-bisphosphoglycerate-dependent phosphoglycerate mutase (211 aa).

Substrate contacts are provided by residues 9–16 (RHGQSDWN), 22–23 (TG), R61, 88–91 (ERDY), K99, 115–116 (RR), and 159–160 (GN). Catalysis depends on H10, which acts as the Tele-phosphohistidine intermediate. Catalysis depends on E88, which acts as the Proton donor/acceptor.

The protein belongs to the phosphoglycerate mutase family. BPG-dependent PGAM subfamily. In terms of assembly, homodimer.

The enzyme catalyses (2R)-2-phosphoglycerate = (2R)-3-phosphoglycerate. Its pathway is carbohydrate degradation; glycolysis; pyruvate from D-glyceraldehyde 3-phosphate: step 3/5. Catalyzes the interconversion of 2-phosphoglycerate and 3-phosphoglycerate. The protein is 2,3-bisphosphoglycerate-dependent phosphoglycerate mutase of Rhizobium etli (strain CIAT 652).